We begin with the raw amino-acid sequence, 212 residues long: Peptide methionine sulfoxide reductase MsrA (212 aa).

Residues 1 to 14 (MNSIDKTQRITQSD) show a composition bias toward polar residues. Residues 1–21 (MNSIDKTQRITQSDALPGRST) are disordered. C52 is an active-site residue.

Belongs to the MsrA Met sulfoxide reductase family.

The catalysed reaction is L-methionyl-[protein] + [thioredoxin]-disulfide + H2O = L-methionyl-(S)-S-oxide-[protein] + [thioredoxin]-dithiol. It catalyses the reaction [thioredoxin]-disulfide + L-methionine + H2O = L-methionine (S)-S-oxide + [thioredoxin]-dithiol. Functionally, has an important function as a repair enzyme for proteins that have been inactivated by oxidation. Catalyzes the reversible oxidation-reduction of methionine sulfoxide in proteins to methionine. This Pectobacterium atrosepticum (strain SCRI 1043 / ATCC BAA-672) (Erwinia carotovora subsp. atroseptica) protein is Peptide methionine sulfoxide reductase MsrA.